Consider the following 256-residue polypeptide: 1-(5-phosphoribosyl)-5-[(5-phosphoribosylamino)methylideneamino] imidazole-4-carboxamide isomerase (256 aa).

The active-site Proton acceptor is Asp9. Asp130 functions as the Proton donor in the catalytic mechanism.

This sequence belongs to the HisA/HisF family.

The protein resides in the cytoplasm. The enzyme catalyses 1-(5-phospho-beta-D-ribosyl)-5-[(5-phospho-beta-D-ribosylamino)methylideneamino]imidazole-4-carboxamide = 5-[(5-phospho-1-deoxy-D-ribulos-1-ylimino)methylamino]-1-(5-phospho-beta-D-ribosyl)imidazole-4-carboxamide. Its pathway is amino-acid biosynthesis; L-histidine biosynthesis; L-histidine from 5-phospho-alpha-D-ribose 1-diphosphate: step 4/9. The polypeptide is 1-(5-phosphoribosyl)-5-[(5-phosphoribosylamino)methylideneamino] imidazole-4-carboxamide isomerase (Prochlorococcus marinus (strain SARG / CCMP1375 / SS120)).